Here is an 809-residue protein sequence, read N- to C-terminus: Putative zinc metalloprotease TRE2 (809 aa).

Polar residues-rich tracts occupy residues 1-12 and 20-30; these read MRSSYQPVSTTN and PTASSSHNLLM. Residues 1 to 66 form a disordered region; the sequence is MRSSYQPVST…PSYEFDIEDP (66 aa). The Cytoplasmic segment spans residues 1–125; sequence MRSSYQPVST…KIGNPFILRR (125 aa). Positions 37–50 are enriched in low complexity; the sequence is SPPSSNDNSIETNI. The helical; Signal-anchor for type II membrane protein transmembrane segment at 126–146 threads the bilayer; that stretch reads FFYIIFMSFIAYYVLSSGYLF. Over 147 to 809 the chain is Extracellular; that stretch reads NEKASGSKGM…VEETNDIGYK (663 aa). A glycan (N-linked (GlcNAc...) asparagine) is linked at Asn-228. A PA domain is found at 255–349; sequence SNGKLSKVSL…STGDASGLNW (95 aa). Asn-669 and Asn-736 each carry an N-linked (GlcNAc...) asparagine glycan.

It belongs to the peptidase M28 family. M28B subfamily.

Its subcellular location is the membrane. This is Putative zinc metalloprotease TRE2 (TRE2) from Saccharomyces cerevisiae (strain ATCC 204508 / S288c) (Baker's yeast).